Consider the following 487-residue polypeptide: UDP-N-acetylmuramate--L-alanine ligase (487 aa).

An ATP-binding site is contributed by 130–136 (GTHGKTT).

The protein belongs to the MurCDEF family.

Its subcellular location is the cytoplasm. It carries out the reaction UDP-N-acetyl-alpha-D-muramate + L-alanine + ATP = UDP-N-acetyl-alpha-D-muramoyl-L-alanine + ADP + phosphate + H(+). Its pathway is cell wall biogenesis; peptidoglycan biosynthesis. Functionally, cell wall formation. The polypeptide is UDP-N-acetylmuramate--L-alanine ligase (Photobacterium profundum (strain SS9)).